A 975-amino-acid chain; its full sequence is MNRVIEIHAHYDQRQLSQSPNTNFLVHHPYLTLIPKFLLGALIVYAPYSFAEMELAISGHKQGKDRDTFTMISSCPEGTNYIINRKLILSDFSLLNKVSSGGAFRNLAGKISFLGKNSSASIHFKHININGFGAGVFSESSIEFTDLRKLVAFGSESTGGIFTAKEDISFKNNHHIAFRNNITKGNGGVIQLQGDMKGSVSFVDQRGAIIFTNNQAVTSSSMKHSGRGGAISGDFAGSRILFLNNQQITFEGNSAVHGGAIYNKNGLVEFLGNAGPLAFKENTTIANGGAIYTSNFKANQQTSPILFSQNHANKKGGAIYAQYVNLEQNQDTIRFEKNTAKEGGGAITSSQCSITAHNTIIFSDNAAGDLGGGAILLEGKKPSLTLIAHSGNIAFSGNTMLHITKKASLDRHNSILIKEAPYKIQLAANKNHSIHFFDPVMALSASSSPIQINAPEYETPFFSPKGMIVFSGANLLDDAREDVANRTSIFNQPVHLYNGTLSIENGAHLIVQSFKQTGGRISLSPGSSLALYTMNSFFHGNISSKEPLEINGLSFGVDISPSNLQAEIRAGNAPLRLSGSPSIHDPEGLFYENRDTAASPYQMEILLTSDKIVDISKFTTDSLVTNKQSGFQGAWHFSWQPNTINNTKQKILRASWLPTGEYVLESNRVGRAVPNSLWSTFLLLQTASHNLGDHLCNNRSLIPTSYFGVLIGGTGAEMSTHSSEEESFISRLGATGTSIIRLTPSLTLSGGGSHMFGDSFVADLPEHITSEGIVQNVGLTHVWGPLTVNSTLCAALDHNAMVRICSKKDHTYGKWDTFGMRGTLGASYTFLEYDQTMRVFSFANIEATNILQRAFTETGYNPRSFSKTKLLNIAIPIGIGYEFCLGNSSFALLGKGSIGYSRDIKRENPSTLAHLAMNDFAWTTNGCSVPTSAHTLANQLILRYKACSLYITAYTINREGKNLSNSLSCGGYVGF.

The signal sequence occupies residues 1–51 (MNRVIEIHAHYDQRQLSQSPNTNFLVHHPYLTLIPKFLLGALIVYAPYSFA). An Autotransporter domain is found at 699 to 975 (RSLIPTSYFG…SLSCGGYVGF (277 aa)).

Belongs to the PMP outer membrane protein family.

It is found in the secreted. Its subcellular location is the cell wall. It localises to the cell outer membrane. The chain is Probable outer membrane protein PmpA (pmpA) from Chlamydia trachomatis serovar D (strain ATCC VR-885 / DSM 19411 / UW-3/Cx).